Here is a 264-residue protein sequence, read N- to C-terminus: Rhodanese-like domain-containing protein 4A, chloroplastic (264 aa).

A chloroplast-targeting transit peptide spans 1–60; that stretch reads MTSLPIILASSPLRNLTKPCSTSQIPKPIQNSTKQPPIHLLTKTNLSVTISQLIITSPVL. Residues 95–115 form a helical membrane-spanning segment; it reads FFVAGCTFTYLVVYPAVMFYL. The region spanning 132–232 is the Rhodanese domain; that stretch reads NESDSQLLDI…ARGKNGWLAI (101 aa).

The protein resides in the plastid. It localises to the chloroplast. It is found in the membrane. The polypeptide is Rhodanese-like domain-containing protein 4A, chloroplastic (STR4A) (Arabidopsis thaliana (Mouse-ear cress)).